A 157-amino-acid polypeptide reads, in one-letter code: ATP synthase subunit b (157 aa).

The helical transmembrane segment at 7–29 (LVSQAIAFSIFIWFTTKFVWPYL) threads the bilayer.

The protein belongs to the ATPase B chain family. F-type ATPases have 2 components, F(1) - the catalytic core - and F(0) - the membrane proton channel. F(1) has five subunits: alpha(3), beta(3), gamma(1), delta(1), epsilon(1). F(0) has three main subunits: a(1), b(2) and c(10-14). The alpha and beta chains form an alternating ring which encloses part of the gamma chain. F(1) is attached to F(0) by a central stalk formed by the gamma and epsilon chains, while a peripheral stalk is formed by the delta and b chains.

It localises to the cell inner membrane. In terms of biological role, f(1)F(0) ATP synthase produces ATP from ADP in the presence of a proton or sodium gradient. F-type ATPases consist of two structural domains, F(1) containing the extramembraneous catalytic core and F(0) containing the membrane proton channel, linked together by a central stalk and a peripheral stalk. During catalysis, ATP synthesis in the catalytic domain of F(1) is coupled via a rotary mechanism of the central stalk subunits to proton translocation. Its function is as follows. Component of the F(0) channel, it forms part of the peripheral stalk, linking F(1) to F(0). The chain is ATP synthase subunit b from Nitrosomonas eutropha (strain DSM 101675 / C91 / Nm57).